We begin with the raw amino-acid sequence, 346 residues long: Lipooligosaccharide heptosyltransferase 2 (346 aa).

The protein belongs to the glycosyltransferase 9 family.

The enzyme catalyses an L-alpha-D-Hep-(1-&gt;5)-[alpha-Kdo-(2-&gt;4)]-alpha-Kdo-(2-&gt;6)-lipid A + ADP-L-glycero-beta-D-manno-heptose = an L-alpha-D-Hep-(1-&gt;3)-L-alpha-D-Hep-(1-&gt;5)-[alpha-Kdo-(2-&gt;4)]-alpha-Kdo-(2-&gt;6)-lipid A + ADP + H(+). The protein operates within bacterial outer membrane biogenesis; LOS core biosynthesis. In terms of biological role, glycosyltransferase involved in the biosynthesis of the core oligosaccharide region of lipooligosaccharide (LOS). Catalyzes the addition of a heptose unit to the heptosyl-Kdo2-lipid A module. This Haemophilus influenzae (strain ATCC 51907 / DSM 11121 / KW20 / Rd) protein is Lipooligosaccharide heptosyltransferase 2 (waaF).